A 37-amino-acid polypeptide reads, in one-letter code: Potassium channel toxin alpha-KTx 11.1 (37 aa).

Disulfide bonds link cysteine 8/cysteine 27, cysteine 13/cysteine 33, and cysteine 17/cysteine 35.

This sequence belongs to the short scorpion toxin superfamily. Potassium channel inhibitor family. Alpha-KTx 11 subfamily. As to expression, expressed by the venom gland.

It is found in the secreted. Functionally, binds and inhibits voltage-sensitive potassium channels. Inhibits the vertebrate potassium channels Kv1.1/KCNA1, Kv1.2/KCNA2 and Kv1.3/KCNA3 with low affinity. Also weakly inhibits Kv7.1/KCNQ1 (10 uM of the toxin inhibits currents by 21.43%). This is Potassium channel toxin alpha-KTx 11.1 from Parabuthus villosus (Black hairy thick-tailed scorpion).